Here is a 79-residue protein sequence, read N- to C-terminus: Biotin synthase auxiliary protein (79 aa).

It belongs to the BsaP family. Iron-sulfur cluster serves as cofactor.

Its function is as follows. Required for the activity of the biotin synthase BioB. This Mycobacterium bovis (strain ATCC BAA-935 / AF2122/97) protein is Biotin synthase auxiliary protein.